The primary structure comprises 29 residues: Chassatide C10 (29 aa).

Positions 1–29 form a cross-link, cyclopeptide (Gly-Asn); it reads GEYCGESCYLIPCFTPGCYCVSRQCVNKN. 3 disulfides stabilise this stretch: Cys4/Cys18, Cys8/Cys20, and Cys13/Cys25.

Post-translationally, this is a cyclic peptide.

Probably participates in a plant defense mechanism. Has no activity against bacteria up to a concentration of 80 uM. Has cytotoxic but no hemolytic activity. The protein is Chassatide C10 of Chassalia chartacea (Chassalia curviflora).